The sequence spans 318 residues: DNA polymerase IV (318 aa).

One can recognise a UmuC domain in the interval 6 to 186; sequence IIHIDMDAFY…LPLGKIPGVG (181 aa). Mg(2+)-binding residues include Asp10 and Asp104. Glu105 is an active-site residue.

This sequence belongs to the DNA polymerase type-Y family. Monomer. It depends on Mg(2+) as a cofactor.

It localises to the cytoplasm. It carries out the reaction DNA(n) + a 2'-deoxyribonucleoside 5'-triphosphate = DNA(n+1) + diphosphate. Its function is as follows. Poorly processive, error-prone DNA polymerase involved in untargeted mutagenesis. Copies undamaged DNA at stalled replication forks, which arise in vivo from mismatched or misaligned primer ends. These misaligned primers can be extended by PolIV. Exhibits no 3'-5' exonuclease (proofreading) activity. May be involved in translesional synthesis, in conjunction with the beta clamp from PolIII. This is DNA polymerase IV from Neisseria meningitidis serogroup B (strain ATCC BAA-335 / MC58).